A 484-amino-acid polypeptide reads, in one-letter code: MKFKQDFFTQLPEFYSQVYPQGITKPEWLAWSDDAAQLIGLSQPTDELLLGLSGNAAVDGATYYAQVYSGHQFGGYTPRLGDGRSIILGEAIGPNGAWDVALKGGGPTPYSRRGDGRAVMRSAVREFLVSEALHHLHVPTTRALAVIGSDLPVWRESQETAAITVRLARSHIRFGHFEFFCHSERGRADKLIQLLNFTITQHYPHLSCDAAGYKAWFLQVVQDTAKMIAHWQAVGFAHGVMNTDNMSILGDSFDFGPFAFLDTFQEDFICNHSDPEGRYAFGQQPGVGLWNLQRLAQALTPVIPSDDLIAILNQYQEALVQPYLRLMRAKLGLSAVDVPSVEQDKQDLDLIGRFTVLMEKNQLDYTQTWRQLGKLDPTSKHSALRDDFIDVSQFDTWYQAYQQRLGAVADIPAWQTERNSVNPKYILRNYLAQEAIIAVEEGNLAPLHLLQKILTQPFAEHAEHEDLAKRPPDWGQGLIMSCSS.

ATP is bound by residues Gly-81, Gly-83, Arg-84, Lys-103, Asp-115, Gly-116, Arg-166, and Arg-173. Asp-244 acts as the Proton acceptor in catalysis. Asn-245 and Asp-254 together coordinate Mg(2+). Residue Asp-254 coordinates ATP.

It belongs to the SELO family. Mg(2+) is required as a cofactor. The cofactor is Mn(2+).

The enzyme catalyses L-seryl-[protein] + ATP = 3-O-(5'-adenylyl)-L-seryl-[protein] + diphosphate. It carries out the reaction L-threonyl-[protein] + ATP = 3-O-(5'-adenylyl)-L-threonyl-[protein] + diphosphate. It catalyses the reaction L-tyrosyl-[protein] + ATP = O-(5'-adenylyl)-L-tyrosyl-[protein] + diphosphate. The catalysed reaction is L-histidyl-[protein] + UTP = N(tele)-(5'-uridylyl)-L-histidyl-[protein] + diphosphate. The enzyme catalyses L-seryl-[protein] + UTP = O-(5'-uridylyl)-L-seryl-[protein] + diphosphate. It carries out the reaction L-tyrosyl-[protein] + UTP = O-(5'-uridylyl)-L-tyrosyl-[protein] + diphosphate. Functionally, nucleotidyltransferase involved in the post-translational modification of proteins. It can catalyze the addition of adenosine monophosphate (AMP) or uridine monophosphate (UMP) to a protein, resulting in modifications known as AMPylation and UMPylation. The chain is Protein nucleotidyltransferase YdiU from Shewanella baltica (strain OS223).